The chain runs to 135 residues: uncharacterized protein (135 aa).

This is an uncharacterized protein from Archaeoglobus fulgidus (strain ATCC 49558 / DSM 4304 / JCM 9628 / NBRC 100126 / VC-16).